A 118-amino-acid chain; its full sequence is Large ribosomal subunit protein uL18 (118 aa).

A disordered region spans residues 1 to 20 (MISKPDKNKKRQRRHARVRS). Positions 7–20 (KNKKRQRRHARVRS) are enriched in basic residues.

It belongs to the universal ribosomal protein uL18 family. As to quaternary structure, part of the 50S ribosomal subunit; part of the 5S rRNA/L5/L18/L25 subcomplex. Contacts the 5S and 23S rRNAs.

This is one of the proteins that bind and probably mediate the attachment of the 5S RNA into the large ribosomal subunit, where it forms part of the central protuberance. The chain is Large ribosomal subunit protein uL18 from Pediococcus pentosaceus (strain ATCC 25745 / CCUG 21536 / LMG 10740 / 183-1w).